Consider the following 356-residue polypeptide: tRNA N6-adenosine threonylcarbamoyltransferase (356 aa).

Histidine 115 and histidine 119 together coordinate Fe cation. Substrate-binding positions include 138-142 (LVSGG), aspartate 171, glycine 184, and asparagine 277. Aspartate 305 is a Fe cation binding site.

Belongs to the KAE1 / TsaD family. Requires Fe(2+) as cofactor.

The protein resides in the cytoplasm. The catalysed reaction is L-threonylcarbamoyladenylate + adenosine(37) in tRNA = N(6)-L-threonylcarbamoyladenosine(37) in tRNA + AMP + H(+). In terms of biological role, required for the formation of a threonylcarbamoyl group on adenosine at position 37 (t(6)A37) in tRNAs that read codons beginning with adenine. Is involved in the transfer of the threonylcarbamoyl moiety of threonylcarbamoyl-AMP (TC-AMP) to the N6 group of A37, together with TsaE and TsaB. TsaD likely plays a direct catalytic role in this reaction. This is tRNA N6-adenosine threonylcarbamoyltransferase from Polaromonas naphthalenivorans (strain CJ2).